Reading from the N-terminus, the 343-residue chain is Trace amine-associated receptor 3 (343 aa).

Over 1–35 the chain is Extracellular; it reads MDLIYIPEDLSSCPKFGNKSCPPTNRSFRVRMIMY. N-linked (GlcNAc...) asparagine glycosylation is found at asparagine 18 and asparagine 25. Intrachain disulfides connect cysteine 21–cysteine 185 and cysteine 104–cysteine 189. The helical transmembrane segment at 36 to 56 threads the bilayer; sequence LFMTGAMVITIFGNLVIIISI. Over 57 to 68 the chain is Cytoplasmic; the sequence is SHFKQLHSPTNF. The chain crosses the membrane as a helical span at residues 69–89; the sequence is LILSMATTDFLLGFVIMPYSM. Residues 90–150 lie on the Extracellular side of the membrane; sequence VRSVESCWYF…TTMTVSMIKR (61 aa). The helical transmembrane segment at 151–168 threads the bilayer; the sequence is LLAFCWAAPALFSFGLVL. Over 169–172 the chain is Cytoplasmic; it reads SEAN. The tract at residues 173–186 is extracellular Loop 2 (ECL2); the sequence is VSGMQSYEILVACF. A helical transmembrane segment spans residues 173 to 193; that stretch reads VSGMQSYEILVACFNFCALTF. Over 194–198 the chain is Extracellular; sequence NKFWG. A helical transmembrane segment spans residues 199 to 223; it reads TILFTTCFFTPGSIMVGIYGKIFIV. Over 224–257 the chain is Cytoplasmic; the sequence is SRRHARALSDMPANTKGAVGKNLSKKKDRKAAKT. A helical membrane pass occupies residues 258-278; that stretch reads LGIVMGVFLACWLPCFLAVLI. The Extracellular segment spans residues 279–287; the sequence is DPYLDYSTP. Residues 288–308 traverse the membrane as a helical segment; that stretch reads IIVLDLLVWLGYFNSTCNPLI. At 309–343 the chain is on the cytoplasmic side; it reads HGFFYPWFRKALQFIVSGKIFRSNSDTANLFPEAH.

Belongs to the G-protein coupled receptor 1 family. Specifically expressed in neurons of the olfactory epithelium.

Its subcellular location is the cell membrane. In terms of biological role, olfactory receptor activated by several primary trace amines, including isoamylamine. Activated by isoamylamine and cyclohexylamine, but not to the corresponding alcohols, isoamylalcohol and cyclohexanol. This receptor is probably mediated by the G(s)-class of G-proteins which activate adenylate cyclase. The protein is Trace amine-associated receptor 3 of Mus musculus (Mouse).